We begin with the raw amino-acid sequence, 75 residues long: Small ribosomal subunit protein bS18 (75 aa).

This sequence belongs to the bacterial ribosomal protein bS18 family. As to quaternary structure, part of the 30S ribosomal subunit. Forms a tight heterodimer with protein bS6.

Binds as a heterodimer with protein bS6 to the central domain of the 16S rRNA, where it helps stabilize the platform of the 30S subunit. This is Small ribosomal subunit protein bS18 from Roseobacter denitrificans (strain ATCC 33942 / OCh 114) (Erythrobacter sp. (strain OCh 114)).